Reading from the N-terminus, the 1055-residue chain is Putative helicase/primase complex protein (1055 aa).

Belongs to the asfivirus F1055L family.

In terms of biological role, may be involved in DNA replication. This is Putative helicase/primase complex protein from Ornithodoros (relapsing fever ticks).